The chain runs to 443 residues: GTPase Der (443 aa).

2 consecutive EngA-type G domains span residues 3-167 (PVIA…PEEK) and 176-349 (IKIA…QSIQ). Residues 9 to 16 (GRPNVGKS), 56 to 60 (DTGGL), 119 to 122 (NKAD), 182 to 189 (GRPNVGKS), 229 to 233 (DTAGI), and 294 to 297 (NKWD) contribute to the GTP site. The 85-residue stretch at 350–434 (QELTTGQLTR…PVHIKLKTDP (85 aa)) folds into the KH-like domain.

This sequence belongs to the TRAFAC class TrmE-Era-EngA-EngB-Septin-like GTPase superfamily. EngA (Der) GTPase family. In terms of assembly, associates with the 50S ribosomal subunit.

Functionally, GTPase that plays an essential role in the late steps of ribosome biogenesis. This chain is GTPase Der, found in Coxiella burnetii (strain CbuK_Q154) (Coxiella burnetii (strain Q154)).